Consider the following 213-residue polypeptide: Octanoyltransferase (213 aa).

A BPL/LPL catalytic domain is found at 32 to 207 (DHTPDEIWLV…KLLALLNNPP (176 aa)). Substrate-binding positions include 71–78 (RGGQVTYH), 138–140 (SLG), and 151–153 (GLA). Cys-169 (acyl-thioester intermediate) is an active-site residue.

This sequence belongs to the LipB family.

It is found in the cytoplasm. It catalyses the reaction octanoyl-[ACP] + L-lysyl-[protein] = N(6)-octanoyl-L-lysyl-[protein] + holo-[ACP] + H(+). It participates in protein modification; protein lipoylation via endogenous pathway; protein N(6)-(lipoyl)lysine from octanoyl-[acyl-carrier-protein]: step 1/2. In terms of biological role, catalyzes the transfer of endogenously produced octanoic acid from octanoyl-acyl-carrier-protein onto the lipoyl domains of lipoate-dependent enzymes. Lipoyl-ACP can also act as a substrate although octanoyl-ACP is likely to be the physiological substrate. The protein is Octanoyltransferase of Enterobacter sp. (strain 638).